The primary structure comprises 276 residues: Rhomboid protease GlpG (276 aa).

6 helical membrane-spanning segments follow: residues 94–114, 142–162, 169–189, 192–212, 229–249, and 250–270; these read GPVT…MSLI, IFMH…WYLG, LGSG…GYVQ, FSGP…GYVW, LIIF…GMSM, and ANGA…VDTL. Catalysis depends on Ser-201, which acts as the Nucleophile. Residue His-254 is part of the active site.

It belongs to the peptidase S54 family.

The protein resides in the cell inner membrane. The catalysed reaction is Cleaves type-1 transmembrane domains using a catalytic dyad composed of serine and histidine that are contributed by different transmembrane domains.. In terms of biological role, rhomboid-type serine protease that catalyzes intramembrane proteolysis. This is Rhomboid protease GlpG from Salmonella agona (strain SL483).